Consider the following 350-residue polypeptide: tRNA uridine(34) hydroxylase (350 aa).

The 95-residue stretch at 146 to 240 (DDPDAIFIDM…YARRAREQGL (95 aa)) folds into the Rhodanese domain. C200 serves as the catalytic Cysteine persulfide intermediate. Residues 318-350 (QRRRRAGREKGNKIFNKSRGRLNSKLGIPDPTE) form a disordered region.

It belongs to the TrhO family.

It catalyses the reaction uridine(34) in tRNA + AH2 + O2 = 5-hydroxyuridine(34) in tRNA + A + H2O. Functionally, catalyzes oxygen-dependent 5-hydroxyuridine (ho5U) modification at position 34 in tRNAs. This Salmonella arizonae (strain ATCC BAA-731 / CDC346-86 / RSK2980) protein is tRNA uridine(34) hydroxylase.